Reading from the N-terminus, the 701-residue chain is A-type ATP synthase subunit I (701 aa).

10 consecutive transmembrane segments (helical) span residues 340-360, 363-379, 388-408, 435-455, 468-488, 498-518, 555-575, 583-603, 612-632, and 649-669; these read WEISPIVFLVFTFPILFGLMF, FGNALVLLLFSIWFYRY, IPKLSIILIYSSIVAIITGLL, LYNLWPIPASVSEAIKFLLPF, MIFSVLLGALALFVSSLLGVI, FLFLEKLPLFLLYVVPIFIFM, GIVWWTSFALLYNWAAHAILV, WGSAIAMGFIEGGFEGALLLL, VLVFALSHYYILYAFSYMAYL, and IIILIIGNLLAIGLEGLVVFI.

Belongs to the V-ATPase 116 kDa subunit family. Has multiple subunits with at least A(3), B(3), C, D, E, F, H, I and proteolipid K(x).

The protein localises to the cell membrane. In terms of biological role, component of the A-type ATP synthase that produces ATP from ADP in the presence of a proton gradient across the membrane. This chain is A-type ATP synthase subunit I, found in Saccharolobus solfataricus (strain ATCC 35092 / DSM 1617 / JCM 11322 / P2) (Sulfolobus solfataricus).